Consider the following 398-residue polypeptide: Chalcone synthase 1 (398 aa).

Position 58-65 (K58–K65) interacts with CoA. C167 (acyl-thioester intermediate) is an active-site residue. Residues T200 and G219–D220 contribute to the substrate site. A311 contributes to the CoA binding site.

The protein belongs to the thiolase-like superfamily. Chalcone/stilbene synthases family. Homodimer.

It carries out the reaction (E)-4-coumaroyl-CoA + 3 malonyl-CoA + 3 H(+) = 2',4,4',6'-tetrahydroxychalcone + 3 CO2 + 4 CoA. The protein operates within secondary metabolite biosynthesis; flavonoid biosynthesis. The primary product of this enzyme is 4,2',4',6'-tetrahydroxychalcone (also termed naringenin-chalcone or chalcone) which can under specific conditions spontaneously isomerize into naringenin. The chain is Chalcone synthase 1 (CHS1) from Oryza sativa subsp. japonica (Rice).